Consider the following 166-residue polypeptide: Large ribosomal subunit protein uL10 (166 aa).

This sequence belongs to the universal ribosomal protein uL10 family. In terms of assembly, part of the ribosomal stalk of the 50S ribosomal subunit. The N-terminus interacts with L11 and the large rRNA to form the base of the stalk. The C-terminus forms an elongated spine to which L12 dimers bind in a sequential fashion forming a multimeric L10(L12)X complex.

Functionally, forms part of the ribosomal stalk, playing a central role in the interaction of the ribosome with GTP-bound translation factors. This is Large ribosomal subunit protein uL10 from Shewanella denitrificans (strain OS217 / ATCC BAA-1090 / DSM 15013).